A 308-amino-acid chain; its full sequence is Glutamyl-Q tRNA(Asp) synthetase (308 aa).

L-glutamate contacts are provided by residues 19–23 (RFAPS) and Glu55. The 'HIGH' region motif lies at 22 to 32 (PSPSGELHFGS). Zn(2+)-binding residues include Cys111, Cys113, Tyr125, and Cys129. L-glutamate is bound by residues Tyr182 and Arg200. The short motif at 238-242 (KLSKQ) is the 'KMSKS' region element. Residue Lys241 participates in ATP binding.

This sequence belongs to the class-I aminoacyl-tRNA synthetase family. GluQ subfamily. It depends on Zn(2+) as a cofactor.

Catalyzes the tRNA-independent activation of glutamate in presence of ATP and the subsequent transfer of glutamate onto a tRNA(Asp). Glutamate is transferred on the 2-amino-5-(4,5-dihydroxy-2-cyclopenten-1-yl) moiety of the queuosine in the wobble position of the QUC anticodon. The chain is Glutamyl-Q tRNA(Asp) synthetase from Shigella flexneri.